We begin with the raw amino-acid sequence, 351 residues long: MIVQRVVLNSRPGKNGNPVAENFRMEEVYLPDNINEGQVQVRTLYLSVDPYMRCRMNEDTGTDYITPWQLSQVVDGGGIGIIEESKHTNLTKGDFVTSFYWPWQTKVILDGNSLEKVDPQLVDGHLSYFLGAIGMPGLTSLIGIQEKGHITAGSNKTMVVSGAAGACGSVAGQIGHLLGCSRVVGICGTHEKCVLLTSELGFDAAINYKKDNVAEQLRESCPAGVDVYFDNVGGNISDTVISQMNENSHIILCGQISQYNKDVPYPPPLSPAIEAIQKERNITRERFLVLNYRDKFEPGILQLSQWFKEGKLKIKETVINGLENMGAAFQSMMTGGNIGKQIVCISEEISL.

99 to 100 contributes to the substrate binding site; sequence FY. Residues 165–168, lysine 192, tyrosine 208, asparagine 231, 253–259, 287–289, and asparagine 337 each bind NADP(+); these read GACG, CGQISQY, and FLV. Position 288 to 290 (288 to 290) interacts with substrate; it reads LVL.

It belongs to the NADP-dependent oxidoreductase L4BD family. As to quaternary structure, monomer.

It is found in the cytoplasm. It catalyses the reaction 13,14-dihydro-15-oxo-prostaglandin E2 + NAD(+) = 15-oxoprostaglandin E2 + NADH + H(+). It carries out the reaction 13,14-dihydro-15-oxo-prostaglandin E2 + NADP(+) = 15-oxoprostaglandin E2 + NADPH + H(+). The catalysed reaction is 13,14-dihydro-15-oxo-PGF2alpha + NADP(+) = 15-oxoprostaglandin F2alpha + NADPH + H(+). The enzyme catalyses 13,14-dihydro-15-oxo-prostaglandin E1 + NADP(+) = 15-oxoprostaglandin E1 + NADPH + H(+). It catalyses the reaction 13,14-dihydro-15-oxo-prostaglandin F1alpha + NADP(+) = 15-oxoprostaglandin F1alpha + NADPH + H(+). Its function is as follows. Functions as 15-oxo-prostaglandin 13-reductase and acts on 15-keto-PGE1, 15-keto-PGE2, 15-keto-PGE1-alpha and 15-keto-PGE2-alpha with highest activity towards 15-keto-PGE2. Overexpression represses transcriptional activity of PPARG and inhibits adipocyte differentiation. The polypeptide is Prostaglandin reductase 2 (PTGR2) (Pongo abelii (Sumatran orangutan)).